The chain runs to 162 residues: MCKRFKFLLAVSALFISITVVLAGCGGSSVPYKKDDTYKDSKDNFITITAENEWRVKGSQNSEANYKVESTEYKGDSHSVVAISVKEKINGSDPLLVVNDYHYYILSPRENGFSLTPIGTSHPNSAQWKEFQEGFKGANDKEEFLKKEVANVNKQNIFKKTN.

Residues 1–24 (MCKRFKFLLAVSALFISITVVLAG) form the signal peptide. Residue cysteine 25 is the site of N-palmitoyl cysteine attachment. Cysteine 25 carries the S-diacylglycerol cysteine lipid modification.

Its subcellular location is the cell membrane. This is an uncharacterized protein from Bacillus anthracis.